Here is a 306-residue protein sequence, read N- to C-terminus: Methionyl-tRNA formyltransferase (306 aa).

(6S)-5,6,7,8-tetrahydrofolate is bound at residue 110–113 (SLLP).

Belongs to the Fmt family.

It carries out the reaction L-methionyl-tRNA(fMet) + (6R)-10-formyltetrahydrofolate = N-formyl-L-methionyl-tRNA(fMet) + (6S)-5,6,7,8-tetrahydrofolate + H(+). Functionally, attaches a formyl group to the free amino group of methionyl-tRNA(fMet). The formyl group appears to play a dual role in the initiator identity of N-formylmethionyl-tRNA by promoting its recognition by IF2 and preventing the misappropriation of this tRNA by the elongation apparatus. This is Methionyl-tRNA formyltransferase from Brucella suis (strain ATCC 23445 / NCTC 10510).